The sequence spans 118 residues: uncharacterized protein (118 aa).

Positions 1–27 are cleaved as a signal peptide; the sequence is MPIKEPDVWALIWSWLQTNLSSSSAQS.

This is an uncharacterized protein from Haemophilus influenzae (strain ATCC 51907 / DSM 11121 / KW20 / Rd).